Consider the following 294-residue polypeptide: MTADRPALRTGDGETRLSFGSNLSSFTEYLRGHAPELLPENRIGHRSHSTRGGDGMESGDLAPHGTTIVALTYKGGVLLAGDRRATQGNLIASRDVEKVYVTDEYSAAGIAGTAGIAIELVRLFAVELEHYEKIEGVQLTFDGKANRLASMVRGNLGAAMQGLAVVPLLVGYDLDADDEAHAGRIVSYDVVGGRYEERAGYHAVGSGSLFAKSALKKIYSPDSDEETALRAAIESLYDAADDDSATGGPDLTRGIYPTAVTITQAGAVHVSEETTSELARRIVAERTEEGGSAR.

Positions 1-65 (MTADRPALRT…MESGDLAPHG (65 aa)) are cleaved as a propeptide — removed in mature form; by autocatalysis. Threonine 66 functions as the Nucleophile in the catalytic mechanism.

The protein belongs to the peptidase T1B family. In terms of assembly, the 20S proteasome core is composed of 14 alpha and 14 beta subunits that assemble into four stacked heptameric rings, resulting in a barrel-shaped structure. The two inner rings, each composed of seven catalytic beta subunits, are sandwiched by two outer rings, each composed of seven alpha subunits. The catalytic chamber with the active sites is on the inside of the barrel. Has a gated structure, the ends of the cylinder being occluded by the N-termini of the alpha-subunits. Is capped by the proteasome-associated ATPase, ARC.

It is found in the cytoplasm. It carries out the reaction Cleavage of peptide bonds with very broad specificity.. It participates in protein degradation; proteasomal Pup-dependent pathway. The formation of the proteasomal ATPase ARC-20S proteasome complex, likely via the docking of the C-termini of ARC into the intersubunit pockets in the alpha-rings, may trigger opening of the gate for substrate entry. Interconversion between the open-gate and close-gate conformations leads to a dynamic regulation of the 20S proteasome proteolysis activity. Functionally, component of the proteasome core, a large protease complex with broad specificity involved in protein degradation. The polypeptide is Proteasome subunit beta (Rhodococcus jostii (strain RHA1)).